The following is a 241-amino-acid chain: Adenosine 5'-phosphosulfate reductase (241 aa).

Residues Cys-122, Cys-123, Cys-205, and Cys-208 each contribute to the [4Fe-4S] cluster site. Catalysis depends on Cys-231, which acts as the Nucleophile; cysteine thiosulfonate intermediate.

Belongs to the PAPS reductase family. CysH subfamily. [4Fe-4S] cluster is required as a cofactor.

The protein resides in the cytoplasm. The catalysed reaction is [thioredoxin]-disulfide + sulfite + AMP + 2 H(+) = adenosine 5'-phosphosulfate + [thioredoxin]-dithiol. It functions in the pathway sulfur metabolism; hydrogen sulfide biosynthesis; sulfite from sulfate. Functionally, catalyzes the formation of sulfite from adenosine 5'-phosphosulfate (APS) using thioredoxin as an electron donor. This Shouchella clausii (strain KSM-K16) (Alkalihalobacillus clausii) protein is Adenosine 5'-phosphosulfate reductase.